The sequence spans 304 residues: tRNA pseudouridine synthase B (304 aa).

Catalysis depends on Asp-44, which acts as the Nucleophile.

This sequence belongs to the pseudouridine synthase TruB family. Type 1 subfamily.

It catalyses the reaction uridine(55) in tRNA = pseudouridine(55) in tRNA. Its function is as follows. Responsible for synthesis of pseudouridine from uracil-55 in the psi GC loop of transfer RNAs. The polypeptide is tRNA pseudouridine synthase B (Novosphingobium aromaticivorans (strain ATCC 700278 / DSM 12444 / CCUG 56034 / CIP 105152 / NBRC 16084 / F199)).